Reading from the N-terminus, the 333-residue chain is Cysteine protease (333 aa).

Positions 1-18 (MKFLLVAALCALVAIGSC) are cleaved as a signal peptide. A propeptide spans 19–108 (KPTREEIKTF…MEAAKEPLIN (90 aa)) (activation peptide). Residue Asn93 is glycosylated (N-linked (GlcNAc...) asparagine). Cystine bridges form between Cys134/Cys182 and Cys168/Cys214. The active site involves Cys137. Catalysis depends on residues His281 and Asn301.

Belongs to the peptidase C1 family. Homodimer.

In terms of biological role, cysteine protease. The protein is Cysteine protease of Blomia tropicalis (Mite).